Reading from the N-terminus, the 65-residue chain is Large ribosomal subunit protein uL29 (65 aa).

This sequence belongs to the universal ribosomal protein uL29 family.

In Dehalococcoides mccartyi (strain ATCC BAA-2266 / KCTC 15142 / 195) (Dehalococcoides ethenogenes (strain 195)), this protein is Large ribosomal subunit protein uL29.